Reading from the N-terminus, the 335-residue chain is Tumor necrosis factor receptor superfamily member 6 (335 aa).

Residues 1–25 form the signal peptide; that stretch reads MLGIWTLLPLVLTSVARLSSKSVNA. Topologically, residues 26 to 173 are extracellular; the sequence is QVTDINSKGL…KCKEEGSRSN (148 aa). O-linked (GalNAc...) threonine glycosylation is present at threonine 28. TNFR-Cys repeat units follow at residues 47–83, 84–127, and 128–166; these read QNLE…PDCV, PCQE…NTKC, and RCKP…TKCK. Cystine bridges form between cysteine 59–cysteine 73, cysteine 63–cysteine 82, cysteine 85–cysteine 101, cysteine 104–cysteine 119, cysteine 107–cysteine 127, cysteine 129–cysteine 143, cysteine 146–cysteine 157, and cysteine 149–cysteine 165. 2 N-linked (GlcNAc...) asparagine glycosylation sites follow: asparagine 118 and asparagine 136. A helical transmembrane segment spans residues 174 to 190; the sequence is LGWLCLLLLPIPLIVWV. Topologically, residues 191-335 are cytoplasmic; that stretch reads KRKEVQKTCR…NFRNEIQSLV (145 aa). Residue cysteine 199 is the site of S-palmitoyl cysteine attachment. Serine 209 is modified (phosphoserine). An interaction with HIPK3 region spans residues 212 to 317; the sequence is SPTLNPETVA…EKIQTIILKD (106 aa). Position 214 is a phosphothreonine (threonine 214). The residue at position 225 (serine 225) is a Phosphoserine. The segment at 230-254 is interaction with CALM; that stretch reads SKYITTIAGVMTLSQVKGFVRKNGV. The region spanning 230 to 314 is the Death domain; the sequence is SKYITTIAGV…TLAEKIQTII (85 aa). Arginine 250 carries a (Microbial infection) N-beta-linked (GlcNAc) arginine glycan.

Component of the death-induced signaling complex (DISC) composed of cell surface receptor FAS/CD95, adapter protein FADD and the CASP8 protease; recruitment of CASP8 to the complex is required for processing of CASP8 into the p18 and p10 subunits. Interacts directly (via DED domain) with NOL3 (via CARD domain); inhibits death-inducing signaling complex (DISC) assembly by inhibiting the increase in FAS-FADD binding induced by FAS activation. Binds DAXX. Interacts with HIPK3. Part of a complex containing HIPK3 and FADD. Binds RIPK1 and FAIM2. Interacts with BABAM2 and FEM1B. Interacts with CALM. In the absence of stimulation, interacts with BIRC2, DDX3X and GSK3B. The interaction with BIRC2 and DDX3X is further enhanced upon receptor stimulation and accompanied by DDX3X and BIRC2 cleavage. Post-translationally, (Microbial infection) Glycosylated at Arg-250 by enteropathogenic E.coli protein NleB1: arginine GlcNAcylation prevents homotypic/heterotypic death domain interactions. In terms of processing, palmitoylated. Palmitoylation by ZDHHC7 prevents the lysosomal degradation of FAS regulating its expression at the plasma membrane. N- and O-glycosylated. O-glycosylated with core 1 or possibly core 8 glycans. In terms of tissue distribution, isoform 1 and isoform 6 are expressed at equal levels in resting peripheral blood mononuclear cells. After activation there is an increase in isoform 1 and decrease in the levels of isoform 6.

The protein resides in the cell membrane. The protein localises to the membrane raft. It is found in the secreted. In terms of biological role, receptor for TNFSF6/FASLG. The adapter molecule FADD recruits caspase CASP8 to the activated receptor. The resulting death-inducing signaling complex (DISC) performs CASP8 proteolytic activation which initiates the subsequent cascade of caspases (aspartate-specific cysteine proteases) mediating apoptosis. FAS-mediated apoptosis may have a role in the induction of peripheral tolerance, in the antigen-stimulated suicide of mature T-cells, or both. The secreted isoforms 2 to 6 block apoptosis (in vitro). This is Tumor necrosis factor receptor superfamily member 6 (FAS) from Homo sapiens (Human).